Reading from the N-terminus, the 380-residue chain is Sterol 24-C-methyltransferase ERG6B (380 aa).

This sequence belongs to the class I-like SAM-binding methyltransferase superfamily. Erg6/SMT family.

It catalyses the reaction lanosterol + S-adenosyl-L-methionine = eburicol + S-adenosyl-L-homocysteine + H(+). It participates in steroid metabolism; ergosterol biosynthesis. In terms of biological role, sterol 24-C-methyltransferase; part of the third module of ergosterol biosynthesis pathway that includes the late steps of the pathway. ERG6A and ERG6B methylate lanosterol at C-24 to produce eburicol. The third module or late pathway involves the ergosterol synthesis itself through consecutive reactions that mainly occur in the endoplasmic reticulum (ER) membrane. Firstly, the squalene synthase ERG9 catalyzes the condensation of 2 farnesyl pyrophosphate moieties to form squalene, which is the precursor of all steroids. Squalene synthase is crucial for balancing the incorporation of farnesyl diphosphate (FPP) into sterol and nonsterol isoprene synthesis. Secondly, squalene is converted into lanosterol by the consecutive action of the squalene epoxidase ERG1 and the lanosterol synthase ERG7. Then, the delta(24)-sterol C-methyltransferase ERG6 methylates lanosterol at C-24 to produce eburicol. Eburicol is the substrate of the sterol 14-alpha demethylase encoded by CYP51A, CYP51B and CYP51C, to yield 4,4,24-trimethyl ergosta-8,14,24(28)-trienol. CYP51B encodes the enzyme primarily responsible for sterol 14-alpha-demethylation, and plays an essential role in ascospore formation. CYP51A encodes an additional sterol 14-alpha-demethylase, induced on ergosterol depletion and responsible for the intrinsic variation in azole sensitivity. The third CYP51 isoform, CYP51C, does not encode a sterol 14-alpha-demethylase, but is required for full virulence on host wheat ears. The C-14 reductase ERG24 then reduces the C14=C15 double bond which leads to 4,4-dimethylfecosterol. A sequence of further demethylations at C-4, involving the C-4 demethylation complex containing the C-4 methylsterol oxidases ERG25, the sterol-4-alpha-carboxylate 3-dehydrogenase ERG26 and the 3-keto-steroid reductase ERG27, leads to the production of fecosterol via 4-methylfecosterol. ERG28 has a role as a scaffold to help anchor ERG25, ERG26 and ERG27 to the endoplasmic reticulum. The C-8 sterol isomerase ERG2 then catalyzes the reaction which results in unsaturation at C-7 in the B ring of sterols and thus converts fecosterol to episterol. The sterol-C5-desaturases ERG3A and ERG3BB then catalyze the introduction of a C-5 double bond in the B ring to produce 5-dehydroepisterol. The C-22 sterol desaturases ERG5A and ERG5B further convert 5-dehydroepisterol into ergosta-5,7,22,24(28)-tetraen-3beta-ol by forming the C-22(23) double bond in the sterol side chain. Finally, ergosta-5,7,22,24(28)-tetraen-3beta-ol is substrate of the C-24(28) sterol reductase ERG4 to produce ergosterol. The chain is Sterol 24-C-methyltransferase ERG6B from Gibberella zeae (strain ATCC MYA-4620 / CBS 123657 / FGSC 9075 / NRRL 31084 / PH-1) (Wheat head blight fungus).